Consider the following 321-residue polypeptide: Phospho-N-acetylmuramoyl-pentapeptide-transferase (321 aa).

10 helical membrane-spanning segments follow: residues 1-21, 50-70, 76-96, 112-132, 140-160, 176-196, 200-220, 225-245, 250-270, and 300-320; these read MIFV…PVLI, MGGL…IIFV, IILL…DDYI, FLAQ…FHLV, IPFT…IVFW, GLAT…SFVL, AIGI…PYNI, VFMG…ISIM, LSLI…MLQV, and VVTV…WIGV.

It belongs to the glycosyltransferase 4 family. MraY subfamily. Mg(2+) is required as a cofactor.

It is found in the cell membrane. It catalyses the reaction UDP-N-acetyl-alpha-D-muramoyl-L-alanyl-gamma-D-glutamyl-L-lysyl-D-alanyl-D-alanine + di-trans,octa-cis-undecaprenyl phosphate = Mur2Ac(oyl-L-Ala-gamma-D-Glu-L-Lys-D-Ala-D-Ala)-di-trans,octa-cis-undecaprenyl diphosphate + UMP. Its pathway is cell wall biogenesis; peptidoglycan biosynthesis. In terms of biological role, catalyzes the initial step of the lipid cycle reactions in the biosynthesis of the cell wall peptidoglycan: transfers peptidoglycan precursor phospho-MurNAc-pentapeptide from UDP-MurNAc-pentapeptide onto the lipid carrier undecaprenyl phosphate, yielding undecaprenyl-pyrophosphoryl-MurNAc-pentapeptide, known as lipid I. This Staphylococcus aureus (strain Mu50 / ATCC 700699) protein is Phospho-N-acetylmuramoyl-pentapeptide-transferase.